A 216-amino-acid chain; its full sequence is Thiamine-phosphate synthase (216 aa).

Residues 37–41 and D68 each bind 4-amino-2-methyl-5-(diphosphooxymethyl)pyrimidine; that span reads QVRSK. Mg(2+) is bound by residues D69 and D93. T112 provides a ligand contact to 4-amino-2-methyl-5-(diphosphooxymethyl)pyrimidine. 140–142 contacts 2-[(2R,5Z)-2-carboxy-4-methylthiazol-5(2H)-ylidene]ethyl phosphate; the sequence is TPT. K143 provides a ligand contact to 4-amino-2-methyl-5-(diphosphooxymethyl)pyrimidine.

Belongs to the thiamine-phosphate synthase family. Mg(2+) is required as a cofactor.

It catalyses the reaction 2-[(2R,5Z)-2-carboxy-4-methylthiazol-5(2H)-ylidene]ethyl phosphate + 4-amino-2-methyl-5-(diphosphooxymethyl)pyrimidine + 2 H(+) = thiamine phosphate + CO2 + diphosphate. The catalysed reaction is 2-(2-carboxy-4-methylthiazol-5-yl)ethyl phosphate + 4-amino-2-methyl-5-(diphosphooxymethyl)pyrimidine + 2 H(+) = thiamine phosphate + CO2 + diphosphate. It carries out the reaction 4-methyl-5-(2-phosphooxyethyl)-thiazole + 4-amino-2-methyl-5-(diphosphooxymethyl)pyrimidine + H(+) = thiamine phosphate + diphosphate. The protein operates within cofactor biosynthesis; thiamine diphosphate biosynthesis; thiamine phosphate from 4-amino-2-methyl-5-diphosphomethylpyrimidine and 4-methyl-5-(2-phosphoethyl)-thiazole: step 1/1. In terms of biological role, condenses 4-methyl-5-(beta-hydroxyethyl)thiazole monophosphate (THZ-P) and 2-methyl-4-amino-5-hydroxymethyl pyrimidine pyrophosphate (HMP-PP) to form thiamine monophosphate (TMP). This Corynebacterium efficiens (strain DSM 44549 / YS-314 / AJ 12310 / JCM 11189 / NBRC 100395) protein is Thiamine-phosphate synthase.